The chain runs to 2314 residues: A-kinase anchor protein 6 (2314 aa).

Positions 1-12 (MLTMSVTLSPLR) are enriched in polar residues. Disordered stretches follow at residues 1 to 25 (MLTM…DASP), 285 to 432 (PSSC…DPPD), 505 to 613 (SLCR…PCHA), and 736 to 755 (TDEK…HSAT). Residues 301–311 (SDDHKGEHGED) are compositionally biased toward basic and acidic residues. The segment covering 319 to 330 (QLDSTVGMSSLD) has biased composition (polar residues). Residues 398-420 (ETQKNERKGSDRKGQVVDLKPEL) are compositionally biased toward basic and acidic residues. The segment covering 569–592 (SKASSSPPCSHSSESSLGSDSIKS) has biased composition (low complexity). Over residues 736-753 (TDEKSERPSSSEKNESHS) the composition is skewed to basic and acidic residues. 2 Spectrin repeats span residues 768–847 (QHQE…QLLE) and 1033–1148 (ILEK…LLDD). Ser-1072 carries the post-translational modification Phosphoserine. A disordered region spans residues 1349–1401 (CHSGDLSQNSGSESGIVSEGDNEMPTNSDMSLFSMVDGSPSNPETEHPDPQMG). Positions 1353–1363 (DLSQNSGSESG) are enriched in polar residues. Phosphoserine occurs at positions 1568 and 1593. 2 stretches are compositionally biased toward basic and acidic residues: residues 1816–1831 (RSGV…DGGG) and 1874–1891 (GENK…HVAD). Disordered stretches follow at residues 1816–1838 (RSGV…ANPS), 1854–1926 (LSEN…KTIS), and 1940–2012 (SEDS…SGAR). The segment covering 1917-1926 (NLASNVKTIS) has biased composition (polar residues). A compositionally biased stretch (basic and acidic residues) spans 1944–1958 (SVARKEFCPPNDRHP). Residues 2062–2075 (IIDMASTALKSKSQ) are PKA-RII subunit binding domain. Residues 2166-2286 (EEAGLPGALP…NAKQPKGKVA (121 aa)) form a disordered region. Over residues 2215-2226 (GADDAKEGDDVS) the composition is skewed to basic and acidic residues. Residues 2227–2243 (HTSQGCAESTEPTTPSG) are compositionally biased toward polar residues.

In terms of assembly, interacts with RII subunit of PKA, phosphatase 2B (calcineurin) and AKAP79. Interacts with SYNPO2.

It localises to the sarcoplasmic reticulum. It is found in the nucleus membrane. In terms of biological role, binds to type II regulatory subunits of protein kinase A and anchors/targets them to the nuclear membrane or sarcoplasmic reticulum. May act as an adapter for assembling multiprotein complexes. The sequence is that of A-kinase anchor protein 6 (Akap6) from Rattus norvegicus (Rat).